The primary structure comprises 285 residues: Putative pyruvate, phosphate dikinase regulatory protein (285 aa).

Residue 165-172 participates in ADP binding; sequence GVSRTSKT.

It belongs to the pyruvate, phosphate/water dikinase regulatory protein family. PDRP subfamily.

The enzyme catalyses N(tele)-phospho-L-histidyl/L-threonyl-[pyruvate, phosphate dikinase] + ADP = N(tele)-phospho-L-histidyl/O-phospho-L-threonyl-[pyruvate, phosphate dikinase] + AMP + H(+). It catalyses the reaction N(tele)-phospho-L-histidyl/O-phospho-L-threonyl-[pyruvate, phosphate dikinase] + phosphate + H(+) = N(tele)-phospho-L-histidyl/L-threonyl-[pyruvate, phosphate dikinase] + diphosphate. Functionally, bifunctional serine/threonine kinase and phosphorylase involved in the regulation of the pyruvate, phosphate dikinase (PPDK) by catalyzing its phosphorylation/dephosphorylation. The polypeptide is Putative pyruvate, phosphate dikinase regulatory protein (Lactobacillus delbrueckii subsp. bulgaricus (strain ATCC BAA-365 / Lb-18)).